The primary structure comprises 551 residues: Cleavage and polyadenylation specificity factor subunit 6 (551 aa).

The necessary for interaction with NXF1 stretch occupies residues 1–213 (MADGVDHIDI…RGRFPGAVPG (213 aa)). The 81-residue stretch at 81–161 (IALYIGNLTW…QSPVVTPCNK (81 aa)) folds into the RRM domain. The segment at 81–161 (IALYIGNLTW…QSPVVTPCNK (81 aa)) is necessary for interaction with NUDT21/CPSF5. Positions 81 to 161 (IALYIGNLTW…QSPVVTPCNK (81 aa)) are necessary for nuclear paraspeckles localization. Threonine 157 carries the post-translational modification Phosphothreonine. Polar residues predominate over residues 169–180 (MQSRKTTQSGQM). Disordered regions lie at residues 169–411 (MQSR…PLSE) and 477–551 (LHGI…YRHR). The segment covering 184–193 (GKAGPPGGGS) has biased composition (gly residues). The GAR motif lies at 202–206 (RGRGR). Residues 207–219 (FPGAVPGGDRFPG) show a composition bias toward low complexity. 3 stretches are compositionally biased toward pro residues: residues 220 to 265 (PAGP…PLAG), 285 to 366 (GQPP…PPPT), and 377 to 388 (GPPPTDPYGRPP). Positions 389–404 (PYDRGDYGPPGREMDT) are enriched in basic and acidic residues. A phosphothreonine mark is found at threonine 404 and threonine 407. The interval 404–551 (TARTPLSEAE…RDREREYRHR (148 aa)) is sufficient for nuclear speckle localization. A necessary for RNA-binding region spans residues 405-551 (ARTPLSEAEF…RDREREYRHR (147 aa)). A necessary for interaction with SRSF3, SRSF7 and TRA2B/SFRS10 region spans residues 481 to 551 (ESKSYGSGSR…RDREREYRHR (71 aa)). Positions 489-503 (SRRERSRERDHSRSR) are enriched in basic and acidic residues. Positions 490-551 (RRERSRERDH…RDREREYRHR (62 aa)) are arg/Ser-rich domain. Serine 494, serine 500, serine 511, serine 513, and serine 525 each carry phosphoserine. Residues 504-514 (EKSRRHKSRSR) show a composition bias toward basic residues. The segment at 510–551 (KSRSRDRHDDYYRERSRERERHRDRDRDRDRERDREREYRHR) is sufficient for nuclear targeting. Residues 515 to 551 (DRHDDYYRERSRERERHRDRDRDRDRERDREREYRHR) are compositionally biased toward basic and acidic residues.

It belongs to the RRM CPSF6/7 family. In terms of assembly, component of the cleavage factor Im (CFIm) complex which is a heterotetramer composed of two subunits of NUDT21/CPSF5 and two subunits of CPSF6 or CPSF7 or a heterodimer of CPSF6 and CPSF7. The cleavage factor Im (CFIm) complex associates with the CPSF and CSTF complexes to promote the assembly of the core mRNA 3'-processing machinery. Associates with the exon junction complex (EJC). Associates with the 80S ribosome particle. Interacts (via the RRM domain) with NUDT21/CPSF5; this interaction is direct and enhances binding to RNA. Interacts (via Arg/Ser-rich domain) with FIP1L1 (preferentially via unphosphorylated form and Arg/Glu/Asp-rich domain); this interaction mediates, at least in part, the interaction between the CFIm and CPSF complexes and may be inhibited by CPSF6 hyper-phosphorylation. Interacts (via N-terminus) with NXF1; this interaction is direct. Interacts with SRSF3. Interacts with SRSF7. Interacts with SNRNP70. Interacts with TRA2B/SFRS10. Interacts with UPF1. Interacts with UPF3B. Interacts with VIRMA. Interacts (via Arg/Ser-rich domain) with TNPO3; promoting nuclear import of CPSF6 independently of its phosphorylation status. Interacts with YTHDC1. In terms of processing, phosphorylated. Phosphorylated in the Arg/Ser-rich domain by SRPK1, in vitro. Post-translationally, symmetrically dimethylated on arginine residues by PRMT5 in a WDR77- and CLNS1A-dependent manner. Asymmetrically dimethylated on arginine residues by PRMT1. Symmetrically dimethylated on arginine residues in the GAR motif by PRMT5 in a WDR77- and CLNS1A-dependent manner. Asymmetrically dimethylated on arginine residues in the GAR motif by PRMT1. Expressed in testis. Expressed in male germ cells (at protein level).

It is found in the nucleus. The protein resides in the nucleoplasm. It localises to the nucleus speckle. Its subcellular location is the cytoplasm. Component of the cleavage factor Im (CFIm) complex that functions as an activator of the pre-mRNA 3'-end cleavage and polyadenylation processing required for the maturation of pre-mRNA into functional mRNAs. CFIm contributes to the recruitment of multiprotein complexes on specific sequences on the pre-mRNA 3'-end, so called cleavage and polyadenylation signals (pA signals). Most pre-mRNAs contain multiple pA signals, resulting in alternative cleavage and polyadenylation (APA) producing mRNAs with variable 3'-end formation. The CFIm complex acts as a key regulator of cleavage and polyadenylation site choice during APA through its binding to 5'-UGUA-3' elements localized in the 3'-untranslated region (UTR) for a huge number of pre-mRNAs. CPSF6 enhances NUDT21/CPSF5 binding to 5'-UGUA-3' elements localized upstream of pA signals and promotes RNA looping, and hence activates directly the mRNA 3'-processing machinery. Plays a role in mRNA export. This is Cleavage and polyadenylation specificity factor subunit 6 from Mus musculus (Mouse).